Reading from the N-terminus, the 443-residue chain is UDP-N-acetylmuramate--L-alanine ligase (443 aa).

An ATP-binding site is contributed by 110–116 (GAHGKTS).

It belongs to the MurCDEF family.

Its subcellular location is the cytoplasm. The enzyme catalyses UDP-N-acetyl-alpha-D-muramate + L-alanine + ATP = UDP-N-acetyl-alpha-D-muramoyl-L-alanine + ADP + phosphate + H(+). It functions in the pathway cell wall biogenesis; peptidoglycan biosynthesis. In terms of biological role, cell wall formation. This Streptococcus agalactiae serotype III (strain NEM316) protein is UDP-N-acetylmuramate--L-alanine ligase.